Consider the following 321-residue polypeptide: Peroxidase 70 (321 aa).

Positions 1-25 (MASSSFTSLSVMVLLCLAAAAVASA) are cleaved as a signal peptide. Gln-26 bears the Pyrrolidone carboxylic acid mark. 4 cysteine pairs are disulfide-bonded: Cys-36-Cys-116, Cys-69-Cys-74, Cys-122-Cys-317, and Cys-201-Cys-226. His-67 serves as the catalytic Proton acceptor. Asp-68, Val-71, Gly-73, Asp-75, and Ser-77 together coordinate Ca(2+). The N-linked (GlcNAc...) asparagine glycan is linked to Asn-81. Pro-164 serves as a coordination point for substrate. Asn-172 is a glycosylation site (N-linked (GlcNAc...) asparagine). Position 194 (His-194) interacts with heme b. Thr-195 serves as a coordination point for Ca(2+). Asn-210 carries an N-linked (GlcNAc...) asparagine glycan. The Ca(2+) site is built by Asp-241, Thr-244, and Asp-249.

It belongs to the peroxidase family. Classical plant (class III) peroxidase subfamily. Heme b is required as a cofactor. It depends on Ca(2+) as a cofactor.

It localises to the secreted. The catalysed reaction is 2 a phenolic donor + H2O2 = 2 a phenolic radical donor + 2 H2O. Removal of H(2)O(2), oxidation of toxic reductants, biosynthesis and degradation of lignin, suberization, auxin catabolism, response to environmental stresses such as wounding, pathogen attack and oxidative stress. These functions might be dependent on each isozyme/isoform in each plant tissue. The chain is Peroxidase 70 (PER70) from Zea mays (Maize).